The chain runs to 166 residues: MTSSVPSLRIGNGYDVHRLVPDRPLILGGQLLEHPAGLGLDGHSDADVLVHAIMDALLGALSLGDIGKYFPPSDPQWKGADSLVLLEQVVALVKARGWGVVNVDAVLIAERPKLKPHIEAMRSAIALRIGVAPDQVGVKATTNEQLGPEGREEGISCQAVALLQAL.

The a divalent metal cation site is built by aspartate 15 and histidine 17. 4-CDP-2-C-methyl-D-erythritol 2-phosphate is bound by residues 15–17 (DVH) and 43–44 (HS). A divalent metal cation is bound at residue histidine 51. Residues 65–67 (DIG), 141–144 (TTNE), and arginine 151 contribute to the 4-CDP-2-C-methyl-D-erythritol 2-phosphate site.

The protein belongs to the IspF family. As to quaternary structure, homotrimer. Requires a divalent metal cation as cofactor.

The catalysed reaction is 4-CDP-2-C-methyl-D-erythritol 2-phosphate = 2-C-methyl-D-erythritol 2,4-cyclic diphosphate + CMP. It participates in isoprenoid biosynthesis; isopentenyl diphosphate biosynthesis via DXP pathway; isopentenyl diphosphate from 1-deoxy-D-xylulose 5-phosphate: step 4/6. Involved in the biosynthesis of isopentenyl diphosphate (IPP) and dimethylallyl diphosphate (DMAPP), two major building blocks of isoprenoid compounds. Catalyzes the conversion of 4-diphosphocytidyl-2-C-methyl-D-erythritol 2-phosphate (CDP-ME2P) to 2-C-methyl-D-erythritol 2,4-cyclodiphosphate (ME-CPP) with a corresponding release of cytidine 5-monophosphate (CMP). The polypeptide is 2-C-methyl-D-erythritol 2,4-cyclodiphosphate synthase (Synechococcus sp. (strain CC9311)).